The sequence spans 534 residues: Echilunin cytochrome P450 monooxygenase (534 aa).

A helical membrane pass occupies residues 18-38 (VSPAALSWAVVAIYLGTFFWL). Heme is bound at residue Cys441.

The protein belongs to the cytochrome P450 family. It depends on heme as a cofactor.

The protein localises to the membrane. The enzyme catalyses preechinulin + reduced [NADPH--hemoprotein reductase] + O2 = neoechinulin A + oxidized [NADPH--hemoprotein reductase] + 2 H2O + H(+). Its pathway is secondary metabolite biosynthesis. The protein operates within alkaloid biosynthesis. Its function is as follows. Cytochrome P450 monooxygenase; part of the gene cluster that mediates the biosynthesis of echinulin family alkaloid. The pathway begins with the biosynthesis of the cyclic dipeptide cyclo-L-Trp-L-Ala (cyclo-TA) by the NRPS echPS via condensation of L-alanine and L-tryptophan. The prenyltransferase echPT1 then catalyzes the first prenylation step, a reverse prenylation reaction at C2, to yield preechinulin. Preechinulin is the substrate of the cytochrome P450 monooxygenase echP450 that catalyzes the formation of the double bond between C10 and C11 to produce neoechulin A. The unique prenyltransferase echPT2 functions as a competitive enzyme with echP450 for preechinulin metabolization and uses preechinulin for effective regiospecific prenylations. Preechinulin is prenylated by echPT2 at C5 or C7. C7-prenylation leads to accumulation of tardioxopiperazine B without further modification by echPT2. In contrast, the C5-prenylated tardioxopiperazine A can be prenylated again by echPT2, predominantly at C7 to form echinulin or less frequently at C4 to give variecolorin L. EchPT2 also accepts neoechilunin A to produce varlecolorin G (prenylation at C5) or isoechinulin A (prenylation at C7). EchPT2 further converts isoechinulin A into dehydroechinulin. Moreover, a yet unidentified enzyme can also convert neoechilunin A into neoechilunin B by introducing a double bond between positions C14 and C17 and thus provides a further substrate to echPT2 for C5 and C7 prenylation. The sequence is that of Echilunin cytochrome P450 monooxygenase from Aspergillus ruber (strain CBS 135680).